The sequence spans 769 residues: Serine/threonine-protein kinase PLK4 (769 aa).

Residues 14 to 267 form the Protein kinase domain; it reads YEVQHLLGKG…LEAVLCHPFM (254 aa). Residues 20-28 and Lys43 each bind ATP; that span reads LGKGGFATV. The active-site Proton acceptor is the Asp138. The 118-residue stretch at 381–498 folds into the Cryptic POLO box 1 (CPB1) domain; that stretch reads EDRISVPPLN…ARFVGLVKSK (118 aa). The Cryptic POLO box 2 (CPB2) domain occupies 499–602; the sequence is TPKVTYFSTL…GRRPITDVQP (104 aa). The 80-residue stretch at 660–739 folds into the POLO box domain; that stretch reads PIKRINVPDI…IPNIQLKLKT (80 aa).

This sequence belongs to the protein kinase superfamily. Ser/Thr protein kinase family. CDC5/Polo subfamily. Homodimer. Ubiquitinated by the SCF(Slimb) ubiquitin ligase complex; leading to its degradation by the proteasome during interphase and regulating centriole number and ensuring the block to centriole reduplication.

Its subcellular location is the cytoplasm. The protein resides in the cytoskeleton. It is found in the microtubule organizing center. The protein localises to the centrosome. It localises to the centriole. It catalyses the reaction L-seryl-[protein] + ATP = O-phospho-L-seryl-[protein] + ADP + H(+). The catalysed reaction is L-threonyl-[protein] + ATP = O-phospho-L-threonyl-[protein] + ADP + H(+). Its function is as follows. Serine/threonine-protein kinase that plays a central role in centriole duplication. Able to trigger procentriole formation on the surface of the mother centriole cylinder, using mother centriole as a platform, leading to the recruitment of centriole biogenesis proteins such as sas-6. When overexpressed, it is able to induce centrosome amplification through the simultaneous generation of multiple procentrioles adjoining each parental centriole during S phase. Centrosome amplification following overexpression can initiate tumorigenesis, highlighting the importance of centrosome regulation in cancers. The protein is Serine/threonine-protein kinase PLK4 (SAK) of Drosophila simulans (Fruit fly).